We begin with the raw amino-acid sequence, 153 residues long: Ribosome maturation factor RimP (153 aa).

The protein belongs to the RimP family.

Its subcellular location is the cytoplasm. Functionally, required for maturation of 30S ribosomal subunits. The sequence is that of Ribosome maturation factor RimP from Nostoc sp. (strain PCC 7120 / SAG 25.82 / UTEX 2576).